Reading from the N-terminus, the 500-residue chain is Na(+)/H(+) antiporter NhaB (500 aa).

Helical transmembrane passes span 13 to 33, 34 to 54, 62 to 82, 97 to 117, 129 to 149, 242 to 262, 306 to 326, 350 to 370, 392 to 412, 449 to 469, and 477 to 497; these read FLGA…IINP, IAVV…EFIF, CYPL…GLTS, ILLL…LLFI, IVIS…LDAL, FLYV…TVVI, GIVA…VGLV, FEEA…VSVI, PIMF…VFVA, VATP…IAPL, and MVWM…LCVT.

It belongs to the NhaB Na(+)/H(+) (TC 2.A.34) antiporter family.

The protein resides in the cell inner membrane. The enzyme catalyses 2 Na(+)(in) + 3 H(+)(out) = 2 Na(+)(out) + 3 H(+)(in). In terms of biological role, na(+)/H(+) antiporter that extrudes sodium in exchange for external protons. The protein is Na(+)/H(+) antiporter NhaB of Marinomonas sp. (strain MWYL1).